A 204-amino-acid polypeptide reads, in one-letter code: Large ribosomal subunit protein uL4 (204 aa).

Polar residues predominate over residues 42 to 52 (GTKAQKSRSQV). Residues 42–70 (GTKAQKSRSQVSGTTKKSKKQKGGGARHG) are disordered.

The protein belongs to the universal ribosomal protein uL4 family. As to quaternary structure, part of the 50S ribosomal subunit.

Its function is as follows. One of the primary rRNA binding proteins, this protein initially binds near the 5'-end of the 23S rRNA. It is important during the early stages of 50S assembly. It makes multiple contacts with different domains of the 23S rRNA in the assembled 50S subunit and ribosome. Functionally, forms part of the polypeptide exit tunnel. The chain is Large ribosomal subunit protein uL4 from Xylella fastidiosa (strain M12).